The chain runs to 164 residues: uncharacterized protein (164 aa).

The signal sequence occupies residues 1–22; it reads MKTNRSLVVIVSLITATLLLTA. Cys-23 carries N-palmitoyl cysteine lipidation. Cys-23 is lipidated: S-diacylglycerol cysteine.

It is found in the cell membrane. This is an uncharacterized protein from Escherichia coli (strain K12).